We begin with the raw amino-acid sequence, 384 residues long: Galactokinase (384 aa).

35-38 is a binding site for substrate; it reads EHTD. Residues Ser69 and 125–131 contribute to the ATP site; that span reads GAGLSSS. 2 residues coordinate Mg(2+): Ser131 and Glu163. Catalysis depends on Asp175, which acts as the Proton acceptor. Tyr224 contributes to the substrate binding site.

The protein belongs to the GHMP kinase family. GalK subfamily.

The protein resides in the cytoplasm. The catalysed reaction is alpha-D-galactose + ATP = alpha-D-galactose 1-phosphate + ADP + H(+). The protein operates within carbohydrate metabolism; galactose metabolism. In terms of biological role, catalyzes the transfer of the gamma-phosphate of ATP to D-galactose to form alpha-D-galactose-1-phosphate (Gal-1-P). The polypeptide is Galactokinase (Aliivibrio fischeri (strain MJ11) (Vibrio fischeri)).